A 663-amino-acid polypeptide reads, in one-letter code: Rap1 GTPase-activating protein 1 (663 aa).

The 17-residue stretch at 1 to 17 (MIEKMQGSRMDEQRCSF) folds into the GoLoco domain. Positions 1-23 (MIEKMQGSRMDEQRCSFPPPLKT) are disordered. Phe-17 is subject to Phosphoserine. Residues 181 to 397 (IVTFDEHVIS…RTRAALLETL (217 aa)) enclose the Rap-GAP domain. Ser-441 is subject to Phosphoserine. Disordered stretches follow at residues 442–604 (MDAM…PHKR) and 616–645 (SVST…PACP). Positions 450-465 (KKPNTVSTSHSGSFAP) are enriched in polar residues. Ser-484, Ser-499, Ser-515, Ser-541, and Ser-542 each carry phosphoserine. The span at 535–549 (ENSSTQSSPEMPTTK) shows a compositional bias: polar residues. Low complexity predominate over residues 567–579 (RSSSSASSFASVV). Over residues 580 to 591 (EETEGVDGEDTG) the composition is skewed to acidic residues. The segment covering 616–630 (SVSTTSGGSSPGPSR) has biased composition (low complexity).

Homodimer and heterodimer with RAP1B. In terms of tissue distribution, significant expression seen in the brain, kidney and pancreas. Abundant in the cerebral cortex and expressed at much lower levels in the spinal cord. Not detected in the lymphoid tissues.

The protein localises to the golgi apparatus membrane. In terms of biological role, GTPase activator for the nuclear Ras-related regulatory protein RAP-1A (KREV-1), converting it to the putatively inactive GDP-bound state. In Homo sapiens (Human), this protein is Rap1 GTPase-activating protein 1 (RAP1GAP).